A 246-amino-acid polypeptide reads, in one-letter code: 3-deoxy-manno-octulosonate cytidylyltransferase (246 aa).

This sequence belongs to the KdsB family.

It localises to the cytoplasm. It catalyses the reaction 3-deoxy-alpha-D-manno-oct-2-ulosonate + CTP = CMP-3-deoxy-beta-D-manno-octulosonate + diphosphate. It participates in nucleotide-sugar biosynthesis; CMP-3-deoxy-D-manno-octulosonate biosynthesis; CMP-3-deoxy-D-manno-octulosonate from 3-deoxy-D-manno-octulosonate and CTP: step 1/1. Its pathway is bacterial outer membrane biogenesis; lipopolysaccharide biosynthesis. Functionally, activates KDO (a required 8-carbon sugar) for incorporation into bacterial lipopolysaccharide in Gram-negative bacteria. The chain is 3-deoxy-manno-octulosonate cytidylyltransferase from Bradyrhizobium diazoefficiens (strain JCM 10833 / BCRC 13528 / IAM 13628 / NBRC 14792 / USDA 110).